A 53-amino-acid chain; its full sequence is MKLTCVLIAAMLLLAVCQLDSADATETGCKKDGSWCWIPSECCIESCLITCWY.

Residues Met-1–Ala-24 form the signal peptide. Intrachain disulfides connect Cys-29-Cys-43, Cys-36-Cys-47, and Cys-42-Cys-51.

Belongs to the conotoxin O1 superfamily. Expressed by the venom duct.

The protein localises to the secreted. In terms of biological role, probable neurotoxin. This is Conotoxin Cal6.27 from Californiconus californicus (California cone).